Reading from the N-terminus, the 349-residue chain is Isopentenyl-diphosphate delta-isomerase (349 aa).

Residue 6 to 7 coordinates substrate; the sequence is RK. Residues 62–64, Ser93, and Asn122 contribute to the FMN site; that span reads AMT. Gln152 provides a ligand contact to substrate. Glu153 is a Mg(2+) binding site. Residues Lys184, Thr214, 258–259, and 280–281 contribute to the FMN site; these read GG and AG.

The protein belongs to the IPP isomerase type 2 family. As to quaternary structure, homooctamer. Dimer of tetramers. Requires FMN as cofactor. NADPH is required as a cofactor. The cofactor is Mg(2+).

The protein resides in the cytoplasm. The enzyme catalyses isopentenyl diphosphate = dimethylallyl diphosphate. Functionally, involved in the biosynthesis of isoprenoids. Catalyzes the 1,3-allylic rearrangement of the homoallylic substrate isopentenyl (IPP) to its allylic isomer, dimethylallyl diphosphate (DMAPP). The protein is Isopentenyl-diphosphate delta-isomerase of Bacillus licheniformis (strain ATCC 14580 / DSM 13 / JCM 2505 / CCUG 7422 / NBRC 12200 / NCIMB 9375 / NCTC 10341 / NRRL NRS-1264 / Gibson 46).